Reading from the N-terminus, the 340-residue chain is Ketol-acid reductoisomerase (NADP(+)) (340 aa).

The region spanning 1–183 (MAITVYYDKD…GGGRTGIIET (183 aa)) is the KARI N-terminal Rossmann domain. Residues 26–29 (FGSQ), serine 54, and 84–87 (DEFQ) contribute to the NADP(+) site. Residue histidine 109 is part of the active site. Glycine 135 serves as a coordination point for NADP(+). A KARI C-terminal knotted domain is found at 184–329 (TFKAETETDL…EKLRGMMPWI (146 aa)). Mg(2+) contacts are provided by aspartate 192, glutamate 196, glutamate 228, and glutamate 232. Residue serine 253 coordinates substrate.

The protein belongs to the ketol-acid reductoisomerase family. The cofactor is Mg(2+).

It catalyses the reaction (2R)-2,3-dihydroxy-3-methylbutanoate + NADP(+) = (2S)-2-acetolactate + NADPH + H(+). It carries out the reaction (2R,3R)-2,3-dihydroxy-3-methylpentanoate + NADP(+) = (S)-2-ethyl-2-hydroxy-3-oxobutanoate + NADPH + H(+). It participates in amino-acid biosynthesis; L-isoleucine biosynthesis; L-isoleucine from 2-oxobutanoate: step 2/4. The protein operates within amino-acid biosynthesis; L-valine biosynthesis; L-valine from pyruvate: step 2/4. In terms of biological role, involved in the biosynthesis of branched-chain amino acids (BCAA). Catalyzes an alkyl-migration followed by a ketol-acid reduction of (S)-2-acetolactate (S2AL) to yield (R)-2,3-dihydroxy-isovalerate. In the isomerase reaction, S2AL is rearranged via a Mg-dependent methyl migration to produce 3-hydroxy-3-methyl-2-ketobutyrate (HMKB). In the reductase reaction, this 2-ketoacid undergoes a metal-dependent reduction by NADPH to yield (R)-2,3-dihydroxy-isovalerate. The polypeptide is Ketol-acid reductoisomerase (NADP(+)) (Campylobacter fetus subsp. fetus (strain 82-40)).